The chain runs to 210 residues: 7-methyl-GTP pyrophosphatase (210 aa).

The Proton acceptor role is filled by D79.

Belongs to the Maf family. YceF subfamily. A divalent metal cation is required as a cofactor.

The protein localises to the cytoplasm. It catalyses the reaction N(7)-methyl-GTP + H2O = N(7)-methyl-GMP + diphosphate + H(+). Functionally, nucleoside triphosphate pyrophosphatase that hydrolyzes 7-methyl-GTP (m(7)GTP). May have a dual role in cell division arrest and in preventing the incorporation of modified nucleotides into cellular nucleic acids. The chain is 7-methyl-GTP pyrophosphatase from Burkholderia lata (strain ATCC 17760 / DSM 23089 / LMG 22485 / NCIMB 9086 / R18194 / 383).